The following is a 317-amino-acid chain: Ribosomal protein L11 methyltransferase (317 aa).

Positions 158, 179, 201, and 244 each coordinate S-adenosyl-L-methionine.

This sequence belongs to the methyltransferase superfamily. PrmA family.

It is found in the cytoplasm. It carries out the reaction L-lysyl-[protein] + 3 S-adenosyl-L-methionine = N(6),N(6),N(6)-trimethyl-L-lysyl-[protein] + 3 S-adenosyl-L-homocysteine + 3 H(+). Methylates ribosomal protein L11. The polypeptide is Ribosomal protein L11 methyltransferase (Streptococcus pyogenes serotype M1).